Reading from the N-terminus, the 113-residue chain is Large ribosomal subunit protein eL31 (113 aa).

The protein belongs to the eukaryotic ribosomal protein eL31 family.

The polypeptide is Large ribosomal subunit protein eL31 (RPL31) (Candida glabrata (strain ATCC 2001 / BCRC 20586 / JCM 3761 / NBRC 0622 / NRRL Y-65 / CBS 138) (Yeast)).